A 404-amino-acid chain; its full sequence is Cytochrome b561 and DOMON domain-containing protein At2g04850 (404 aa).

The first 22 residues, 1–22 (MATLILSFLLLLLATKLPESLA), serve as a signal peptide directing secretion. In terms of domain architecture, DOMON spans 43–173 (QQASIAWTYH…TKIHHVWNRG (131 aa)). In terms of domain architecture, Cytochrome b561 spans 180 to 380 (SPTIHPTTST…MEVNSWVVFC (201 aa)). The chain crosses the membrane as a helical span at residues 217–237 (VTHGVVNAISWGFLLPAGAVT). Residues His219 and His255 each contribute to the heme b site. Residues 256 to 276 (AAIQLTGFLLGTIGFSIGIVL) traverse the membrane as a helical segment. His288 is a heme b binding site. The chain crosses the membrane as a helical span at residues 290-310 (SLGIATFTAAALQTLALLFRP). His324 is a heme b binding site. A run of 2 helical transmembrane segments spans residues 326 to 346 (FVGY…FEVL) and 359 to 379 (LCLS…WVVF).

The cofactor is heme b.

Its subcellular location is the membrane. Its function is as follows. May act as a catecholamine-responsive trans-membrane electron transporter. This chain is Cytochrome b561 and DOMON domain-containing protein At2g04850, found in Arabidopsis thaliana (Mouse-ear cress).